The primary structure comprises 383 residues: Succinate--CoA ligase [ADP-forming] subunit beta 2 (383 aa).

The region spanning Arg9–Arg231 is the ATP-grasp domain. ATP-binding positions include Lys45, Gly52 to Gly54, Cys94, and Glu99. Mg(2+) contacts are provided by Asn187 and Asp201. Substrate contacts are provided by residues Asn251 and Gly308 to Thr310.

Belongs to the succinate/malate CoA ligase beta subunit family. Heterotetramer of two alpha and two beta subunits. Mg(2+) is required as a cofactor.

It carries out the reaction succinate + ATP + CoA = succinyl-CoA + ADP + phosphate. The enzyme catalyses GTP + succinate + CoA = succinyl-CoA + GDP + phosphate. Its pathway is carbohydrate metabolism; tricarboxylic acid cycle; succinate from succinyl-CoA (ligase route): step 1/1. Its function is as follows. Succinyl-CoA synthetase functions in the citric acid cycle (TCA), coupling the hydrolysis of succinyl-CoA to the synthesis of either ATP or GTP and thus represents the only step of substrate-level phosphorylation in the TCA. The beta subunit provides nucleotide specificity of the enzyme and binds the substrate succinate, while the binding sites for coenzyme A and phosphate are found in the alpha subunit. The polypeptide is Succinate--CoA ligase [ADP-forming] subunit beta 2 (Streptomyces coelicolor (strain ATCC BAA-471 / A3(2) / M145)).